The following is a 404-amino-acid chain: Trigger factor (404 aa).

The PPIase FKBP-type domain maps to 160–225 (KDHLFVRTEE…VLEVKTLKLP (66 aa)).

The protein belongs to the FKBP-type PPIase family. Tig subfamily.

It localises to the cytoplasm. The enzyme catalyses [protein]-peptidylproline (omega=180) = [protein]-peptidylproline (omega=0). Its function is as follows. Involved in protein export. Acts as a chaperone by maintaining the newly synthesized protein in an open conformation. Functions as a peptidyl-prolyl cis-trans isomerase. This chain is Trigger factor, found in Thermus thermophilus (strain ATCC 27634 / DSM 579 / HB8).